The sequence spans 66 residues: Sodium channel neurotoxin MeuNaTxalpha-7 (66 aa).

Residues 2 to 64 (RDGYIADDKN…VPIKVSGKCN (63 aa)) form the LCN-type CS-alpha/beta domain. Cystine bridges form between Cys-12–Cys-63, Cys-16–Cys-36, Cys-22–Cys-46, and Cys-26–Cys-48. Residue Asn-64 is modified to Asparagine amide.

This sequence belongs to the long (4 C-C) scorpion toxin superfamily. Sodium channel inhibitor family. Alpha subfamily. As to expression, expressed by the venom gland.

The protein localises to the secreted. Functionally, alpha toxins bind voltage-independently at site-3 of sodium channels (Nav) and inhibit the inactivation of the activated channels, thereby blocking neuronal transmission. The chain is Sodium channel neurotoxin MeuNaTxalpha-7 from Mesobuthus eupeus (Lesser Asian scorpion).